Consider the following 198-residue polypeptide: TM2 domain-containing protein 2 (198 aa).

The first 27 residues, 1-27 (MRWPVPPLGYLLLGGQGLLLTFSLISS), serve as a signal peptide directing secretion. Topologically, residues 28-128 (QNNTSPVTYP…FLRGNRPCIK (101 aa)) are extracellular. 3 N-linked (GlcNAc...) asparagine glycosylation sites follow: asparagine 29, asparagine 40, and asparagine 76. The chain crosses the membrane as a helical span at residues 129–149 (YTGHYFITTLLYSFFLGCFGV). The TM2 domain maps to 131-179 (GHYFITTLLYSFFLGCFGVDRFCLGHTGTAVGKLLTWGGLGIWWFVDLI). Over 150–166 (DRFCLGHTGTAVGKLLT) the chain is Cytoplasmic. Residues 167–187 (WGGLGIWWFVDLILLITGGLM) form a helical membrane-spanning segment. The Extracellular portion of the chain corresponds to 188 to 198 (PSDNSNWCTIY).

The protein belongs to the TM2 family.

It is found in the membrane. The protein is TM2 domain-containing protein 2 (tm2d2) of Xenopus laevis (African clawed frog).